Here is a 223-residue protein sequence, read N- to C-terminus: MNTSTSAFDFGSSTASSAATSTTSSQPDANDHLSRLAAMTQGVGKEDPETSSTPSTEASLYPGISAAYMQSYGWPQNYNYFGQPLGPATFPGWPQCYPNTAWPNYGELFASSKKGRQTYQRYQTSVLEAKFQQSSYVSKKQREELRLQTQLTDRQIKIWFQNRRMKAKKEKQRVDDHTEHTPLLPANPPKGMGMDMDDEKKWQMAHWPPAAAHNPYQYPLCPP.

Low complexity predominate over residues 1–25; sequence MNTSTSAFDFGSSTASSAATSTTSS. Disordered regions lie at residues 1-58 and 168-191; these read MNTS…STEA and KKEK…PPKG. The homeobox DNA-binding region spans 112–171; that stretch reads SKKGRQTYQRYQTSVLEAKFQQSSYVSKKQREELRLQTQLTDRQIKIWFQNRRMKAKKEK.

The protein belongs to the Abd-B homeobox family. Interacts with the TCF transcription factor pop-1.

It is found in the nucleus. In terms of biological role, involved in control of cell fate and pattern formation along the anterior-posterior axis, acting mainly in the tail. Required during embryonic and postembryonic development. Essential for the determination of specific neurons, including the PLM touch neurons. Plays a role in neural fate specification in the hermaphrodite-specific neuron (HSN)/PHB neuron lineage, acting in concert with T-box protein tbx-2 and the asymmetric cell division protein ham-1. Required for male gonadal fate determination, acting in parallel with a WNT/beta-catenin pathway, perhaps by recruiting pop-1 to male-specific gonadal target genes. Involved in development of the hermaphrodite hindgut, and for the response to rectal infection by the coryneform bacterium M.nematophilum. This is Homeobox protein egl-5 from Caenorhabditis elegans.